Here is a 242-residue protein sequence, read N- to C-terminus: Probable porphobilinogen deaminase (242 aa).

The protein belongs to the HMBS family.

It catalyses the reaction 4 porphobilinogen + H2O = hydroxymethylbilane + 4 NH4(+). Its pathway is porphyrin-containing compound metabolism; protoporphyrin-IX biosynthesis; coproporphyrinogen-III from 5-aminolevulinate: step 2/4. Its function is as follows. Tetrapolymerization of the monopyrrole PBG into the hydroxymethylbilane pre-uroporphyrinogen in several discrete steps. This is Probable porphobilinogen deaminase (hemC) from Chlamydia muridarum (strain MoPn / Nigg).